The sequence spans 530 residues: Light-independent protochlorophyllide reductase subunit B (530 aa).

Position 36 (Asp-36) interacts with [4Fe-4S] cluster. Asp-290 acts as the Proton donor in catalysis. 425-426 (GL) contributes to the substrate binding site. The tract at residues 448 to 483 (LGHLGGHASETKTSSKGINQSPNNHSPAGESIHWTS) is disordered. The segment covering 458-473 (TKTSSKGINQSPNNHS) has biased composition (polar residues).

The protein belongs to the ChlB/BchB/BchZ family. In terms of assembly, protochlorophyllide reductase is composed of three subunits; ChlL, ChlN and ChlB. Forms a heterotetramer of two ChlB and two ChlN subunits. [4Fe-4S] cluster is required as a cofactor.

It catalyses the reaction chlorophyllide a + oxidized 2[4Fe-4S]-[ferredoxin] + 2 ADP + 2 phosphate = protochlorophyllide a + reduced 2[4Fe-4S]-[ferredoxin] + 2 ATP + 2 H2O. Its pathway is porphyrin-containing compound metabolism; chlorophyll biosynthesis (light-independent). Its function is as follows. Component of the dark-operative protochlorophyllide reductase (DPOR) that uses Mg-ATP and reduced ferredoxin to reduce ring D of protochlorophyllide (Pchlide) to form chlorophyllide a (Chlide). This reaction is light-independent. The NB-protein (ChlN-ChlB) is the catalytic component of the complex. The protein is Light-independent protochlorophyllide reductase subunit B of Prochlorococcus marinus (strain SARG / CCMP1375 / SS120).